Reading from the N-terminus, the 248-residue chain is Exosome complex component Rrp41 (248 aa).

This sequence belongs to the RNase PH family. Rrp41 subfamily. Component of the archaeal exosome complex. Forms a hexameric ring-like arrangement composed of 3 Rrp41-Rrp42 heterodimers. The hexameric ring associates with a trimer of Rrp4 and/or Csl4 subunits.

It is found in the cytoplasm. In terms of biological role, catalytic component of the exosome, which is a complex involved in RNA degradation. Has 3'-&gt;5' exoribonuclease activity. Can also synthesize heteromeric RNA-tails. Binds RNA. This is Exosome complex component Rrp41 from Saccharolobus solfataricus (strain ATCC 35092 / DSM 1617 / JCM 11322 / P2) (Sulfolobus solfataricus).